Consider the following 565-residue polypeptide: Calcium-dependent protein kinase 21 (565 aa).

Residue Gly-2 is the site of N-myristoyl glycine attachment. Residues 28-55 (PVPDAEAASPRKDGVDGDGDDVRGGGGG) are disordered. The span at 36–50 (SPRKDGVDGDGDDVR) shows a compositional bias: basic and acidic residues. The region spanning 77 to 358 (YVLGKELGRG…AKQVLEHPWL (282 aa)) is the Protein kinase domain. ATP is bound by residues 83-91 (LGRGEFGVT) and Lys-106. The active-site Proton acceptor is Asp-224. Residues 364-394 (APNVSLGDAVRARLQQFSAMNKFKKKALGVV) form an autoinhibitory domain region. EF-hand domains follow at residues 401–436 (EEVDKYVQMFHHMDKDKNGHLSLDELLEGLHINGQP), 437–472 (VPEPEIRMLLEAADTDGNGTLDCDEFVTVSVHLKKM), 473–500 (SNDEYLAAAFNYFDKDGSGFIELDELRE), and 504–539 (PNEQAILEILRDVDTDKDGRISYQEFELMMKSGADW). 19 residues coordinate Ca(2+): Asp-414, Asp-416, Asn-418, His-420, Glu-425, Asp-450, Asp-452, Asn-454, Thr-456, Glu-461, Asp-486, Asp-488, Ser-490, Glu-497, Asp-517, Asp-519, Asp-521, Arg-523, and Glu-528.

The protein belongs to the protein kinase superfamily. Ser/Thr protein kinase family. CDPK subfamily. In terms of tissue distribution, expressed in spikelets and developing seeds.

Its subcellular location is the membrane. It catalyses the reaction L-seryl-[protein] + ATP = O-phospho-L-seryl-[protein] + ADP + H(+). The catalysed reaction is L-threonyl-[protein] + ATP = O-phospho-L-threonyl-[protein] + ADP + H(+). Its activity is regulated as follows. Activated by calcium. Autophosphorylation may play an important role in the regulation of the kinase activity. May play a role in signal transduction pathways that involve calcium as a second messenger. Functions in signal transduction pathways that positively regulate responses to abscisic acid (ABA) and salt stress. This chain is Calcium-dependent protein kinase 21, found in Oryza sativa subsp. japonica (Rice).